Consider the following 1470-residue polypeptide: Roundabout homolog 2 (1470 aa).

The first 21 residues, 1–21 (MNPLMFTLLLLFGFLCIQIDG), serve as a signal peptide directing secretion. Topologically, residues 22-863 (SRLRQEDFPP…EQITDVVKQP (842 aa)) are extracellular. Ig-like C2-type domains follow at residues 31 to 127 (PRIV…ASLE), 133 to 220 (DDFR…AELT), 225 to 309 (PTFL…ATLT), 318 to 413 (PQFV…LEVT), and 422 to 508 (PIIL…AVLD). The cysteines at positions 52 and 110 are disulfide-linked. Asn123 is a glycosylation site (N-linked (GlcNAc...) asparagine). 3 cysteine pairs are disulfide-bonded: Cys154/Cys203, Cys246/Cys293, and Cys339/Cys395. N-linked (GlcNAc...) asparagine glycosylation occurs at Asn430. Cys443 and Cys492 are disulfide-bonded. 3 consecutive Fibronectin type-III domains span residues 528-622 (PPSK…TQDI), 641-739 (VVVR…TEEA), and 743-840 (PPQS…IGGR). 4 N-linked (GlcNAc...) asparagine glycosylation sites follow: Asn756, Asn786, Asn793, and Asn849. A helical membrane pass occupies residues 864–884 (AFIAGIGGACWVILMGFSIWL). Residues 885-1470 (YWRRKKRKGL…GSNSQGQFTE (586 aa)) lie on the Cytoplasmic side of the membrane. 4 disordered regions span residues 1036–1089 (GFGY…LPGT), 1129–1159 (EDRVPTPPVRGVASSPAISFGQQSTATLTPS), 1190–1371 (IQSN…DCPA), and 1383–1470 (DWIN…QFTE). Residues 1144 to 1158 (PAISFGQQSTATLTP) are compositionally biased toward polar residues. Residue Thr1157 is modified to Phosphothreonine. Position 1159 is a phosphoserine (Ser1159). The span at 1194–1203 (TPPPQPPAPP) shows a compositional bias: pro residues. The span at 1215–1231 (LETDVPDEDADDEEEPL) shows a compositional bias: acidic residues. Residues 1243–1288 (TPGSSMDNLDSSVTGKAFSSSQRQRPTSPFSTDSNTSAAQNQSQRP) are compositionally biased toward polar residues. Positions 1315-1325 (DLPPPPDPPPG) are enriched in pro residues. Positions 1328-1343 (LRQQIGLSQHSGNVEN) are enriched in polar residues. Residues 1413 to 1437 (SKPSFPSPGGHSSSGTSSSKGSTGP) are compositionally biased toward low complexity. A compositionally biased stretch (polar residues) spans 1461–1470 (GSNSQGQFTE).

Belongs to the immunoglobulin superfamily. ROBO family. Interacts with SLIT2. In terms of tissue distribution, expressed in embryonal spinal cord.

Its subcellular location is the membrane. In terms of biological role, receptor for SLIT2, and probably SLIT1, which are thought to act as molecular guidance cue in cellular migration, including axonal navigation at the ventral midline of the neural tube and projection of axons to different regions during neuronal development. The protein is Roundabout homolog 2 (Robo2) of Mus musculus (Mouse).